We begin with the raw amino-acid sequence, 67 residues long: Large ribosomal subunit protein uL29 (67 aa).

This sequence belongs to the universal ribosomal protein uL29 family.

This chain is Large ribosomal subunit protein uL29, found in Ruminiclostridium cellulolyticum (strain ATCC 35319 / DSM 5812 / JCM 6584 / H10) (Clostridium cellulolyticum).